Here is a 216-residue protein sequence, read N- to C-terminus: MLDREGFRPNVGIILLNAHNEVFWGKRLREHSWQFPQGGIKYGETPMQAMYRELHEETGLLPEHVKIIGRTRDWLRYEVPDKFIKREVRGHYRGQKQIWFLLRMVGRDCDICLRATDHPEFDAWRWNEYWVPLDAVIEFKRDVYQLALTELSRFLRRPAQRTDKSRGPRAPRYPRVANGHAASETPAAIDTSAVCSEVEPGANALDETPPRVSLRD.

The region spanning 6–149 (GFRPNVGIIL…KRDVYQLALT (144 aa)) is the Nudix hydrolase domain. The short motif at 38 to 59 (GGIKYGETPMQAMYRELHEETG) is the Nudix box element. Residues 159–191 (AQRTDKSRGPRAPRYPRVANGHAASETPAAIDT) are disordered.

This sequence belongs to the Nudix hydrolase family. RppH subfamily. A divalent metal cation is required as a cofactor.

Functionally, accelerates the degradation of transcripts by removing pyrophosphate from the 5'-end of triphosphorylated RNA, leading to a more labile monophosphorylated state that can stimulate subsequent ribonuclease cleavage. The chain is RNA pyrophosphohydrolase from Burkholderia pseudomallei (strain 668).